Reading from the N-terminus, the 307-residue chain is tRNA pseudouridine synthase B (307 aa).

Asp-38 acts as the Nucleophile in catalysis.

Belongs to the pseudouridine synthase TruB family. Type 1 subfamily.

It catalyses the reaction uridine(55) in tRNA = pseudouridine(55) in tRNA. Functionally, responsible for synthesis of pseudouridine from uracil-55 in the psi GC loop of transfer RNAs. This is tRNA pseudouridine synthase B from Bacillus thuringiensis (strain Al Hakam).